A 496-amino-acid chain; its full sequence is Angiopoietin-2 (496 aa).

Positions 1 to 18 are cleaved as a signal peptide; the sequence is MWQLVFLTLSCDLAVATA. N-linked (GlcNAc...) asparagine glycosylation is found at Asn90, Asn120, Asn134, Asn152, Asn241, and Asn304. The stretch at 167 to 249 forms a coiled coil; that stretch reads STNKLEKQIL…VNNSVLQKQQ (83 aa). In terms of domain architecture, Fibrinogen C-terminal spans 275-495; sequence KDEQIIFRDC…ATTMMIRPAD (221 aa). An intrachain disulfide couples Cys284 to Cys313. The Ca(2+) site is built by Asp429, Asp431, Cys433, and Cys435. 2 disulfides stabilise this stretch: Cys433-Cys435 and Cys437-Cys450.

In terms of assembly, interacts with TEK/TIE2, competing for the same binding site as ANGPT1. Interacts with ITGA5. Interacts with SVEP1/polydom. Interacts with THBD; this interaction significantly inhibits the generation of activated PC and TAFIa/CPB2 by the thrombin/thrombomodulin complex.

Its subcellular location is the secreted. Functionally, binds to TEK/TIE2, competing for the ANGPT1 binding site, and modulating ANGPT1 signaling. Can induce tyrosine phosphorylation of TEK/TIE2 in the absence of ANGPT1. In the absence of angiogenic inducers, such as VEGF, ANGPT2-mediated loosening of cell-matrix contacts may induce endothelial cell apoptosis with consequent vascular regression. In concert with VEGF, it may facilitate endothelial cell migration and proliferation, thus serving as a permissive angiogenic signal. Involved in the regulation of lymphangiogenesis. This Bos taurus (Bovine) protein is Angiopoietin-2 (ANGPT2).